A 345-amino-acid polypeptide reads, in one-letter code: Delta(6)-protoilludene synthase (345 aa).

Residues aspartate 84, asparagine 220, serine 224, and glutamate 228 each contribute to the Mg(2+) site. Positions 84-88 match the DDXXD motif motif; the sequence is DEYSD. The (2E,6E)-farnesyl diphosphate site is built by arginine 309 and tyrosine 310.

It belongs to the terpene synthase family. As to quaternary structure, monomer. Mg(2+) is required as a cofactor.

It catalyses the reaction (2E,6E)-farnesyl diphosphate = Delta(6)-protoilludene + diphosphate. Its pathway is secondary metabolite biosynthesis. Delta(6)-protoilludene synthase, part of the gene cluster that mediates the biosynthesis of melleolides, a range of antifungal and phytotoxic polyketide derivatives composed of an orsellinic acid (OA) moiety esterified to various sesquiterpene alcohols. The first step in melleolides biosynthesis is performed by the delta(6)-protoilludene synthase PRO1 which catalyzes the cyclization of farnesyl diphosphate to protoilludene. The orsellinic acid synthase armB produces OA by condensing acetyl-CoA with 3 malonyl-CoA units in a three-round chain elongation reaction folowed by a C2-C7 ring closure. ArmB further catalyzes the trans-esterification of OA to the various sesquiterpene alcohols resulting from the hydroxylation of protoilludene. The melleolides cluster also includes 5 cytochrome P450 monooxygenases, 4 NAD(+)-dependent oxidoreductases, one flavin-dependent oxidoreductase, and one O-methyltransferase. The cytochrome P450 monooxygenases may be involved in protoilludene hydroxylation to elaborate melleolides with multiple alcohol groups, such as melleolide D, which carries alcohol functionalities at C-4, C-5, C-10, and C-13. The role of the NAD(+)-dependent enzymes remains unknown. Numerous melleolides, including arnamial, show 5'-O-methylation of the aromatic moiety which may be catalyzed by the methyltransferase encoded in the cluster. The flavin-dependent oxidoreductase might represent the dehydrogenase yielding the aldehyde in position 1 of arnamial and other melleolides. Finally, several halogenases, localized outside of the cluster, are able to catalyze the transfer of a single chlorine atom to the melleolide backbone, resulting in a 6'-chloromelleolide product. The chain is Delta(6)-protoilludene synthase from Armillaria gallica (Bulbous honey fungus).